The chain runs to 228 residues: Ribose-5-phosphate isomerase A (228 aa).

Substrate is bound by residues 32-35 (TGST), 85-88 (DGAD), and 98-101 (KGGG). Glu-107 (proton acceptor) is an active-site residue. Lys-125 is a binding site for substrate.

The protein belongs to the ribose 5-phosphate isomerase family. Homodimer.

It carries out the reaction aldehydo-D-ribose 5-phosphate = D-ribulose 5-phosphate. It functions in the pathway carbohydrate degradation; pentose phosphate pathway; D-ribose 5-phosphate from D-ribulose 5-phosphate (non-oxidative stage): step 1/1. In terms of biological role, catalyzes the reversible conversion of ribose-5-phosphate to ribulose 5-phosphate. This chain is Ribose-5-phosphate isomerase A, found in Cupriavidus taiwanensis (strain DSM 17343 / BCRC 17206 / CCUG 44338 / CIP 107171 / LMG 19424 / R1) (Ralstonia taiwanensis (strain LMG 19424)).